Consider the following 150-residue polypeptide: Endoribonuclease YbeY (150 aa).

Zn(2+) is bound by residues His102, His106, and His112.

The protein belongs to the endoribonuclease YbeY family. Zn(2+) serves as cofactor.

Its subcellular location is the cytoplasm. Single strand-specific metallo-endoribonuclease involved in late-stage 70S ribosome quality control and in maturation of the 3' terminus of the 16S rRNA. This Thermotoga sp. (strain RQ2) protein is Endoribonuclease YbeY.